The following is a 172-amino-acid chain: S-ribosylhomocysteine lyase (172 aa).

Fe cation contacts are provided by His54, His58, and Cys128.

This sequence belongs to the LuxS family. In terms of assembly, homodimer. It depends on Fe cation as a cofactor.

The catalysed reaction is S-(5-deoxy-D-ribos-5-yl)-L-homocysteine = (S)-4,5-dihydroxypentane-2,3-dione + L-homocysteine. In terms of biological role, involved in the synthesis of autoinducer 2 (AI-2) which is secreted by bacteria and is used to communicate both the cell density and the metabolic potential of the environment. The regulation of gene expression in response to changes in cell density is called quorum sensing. Catalyzes the transformation of S-ribosylhomocysteine (RHC) to homocysteine (HC) and 4,5-dihydroxy-2,3-pentadione (DPD). This is S-ribosylhomocysteine lyase from Vibrio atlanticus (strain LGP32) (Vibrio splendidus (strain Mel32)).